The following is a 197-amino-acid chain: Protein GrpE (197 aa).

Over residues 1–27 (MSNKEQHIEKEEQLQEEKHEEQQKTEE) the composition is skewed to basic and acidic residues. Positions 1–34 (MSNKEQHIEKEEQLQEEKHEEQQKTEETEVEAVN) are disordered.

Belongs to the GrpE family. Homodimer.

The protein localises to the cytoplasm. Its function is as follows. Participates actively in the response to hyperosmotic and heat shock by preventing the aggregation of stress-denatured proteins, in association with DnaK and GrpE. It is the nucleotide exchange factor for DnaK and may function as a thermosensor. Unfolded proteins bind initially to DnaJ; upon interaction with the DnaJ-bound protein, DnaK hydrolyzes its bound ATP, resulting in the formation of a stable complex. GrpE releases ADP from DnaK; ATP binding to DnaK triggers the release of the substrate protein, thus completing the reaction cycle. Several rounds of ATP-dependent interactions between DnaJ, DnaK and GrpE are required for fully efficient folding. The chain is Protein GrpE from Pasteurella multocida (strain Pm70).